An 80-amino-acid polypeptide reads, in one-letter code: Exodeoxyribonuclease 7 small subunit (80 aa).

The protein belongs to the XseB family. In terms of assembly, heterooligomer composed of large and small subunits.

It is found in the cytoplasm. The enzyme catalyses Exonucleolytic cleavage in either 5'- to 3'- or 3'- to 5'-direction to yield nucleoside 5'-phosphates.. In terms of biological role, bidirectionally degrades single-stranded DNA into large acid-insoluble oligonucleotides, which are then degraded further into small acid-soluble oligonucleotides. The polypeptide is Exodeoxyribonuclease 7 small subunit (Citrobacter koseri (strain ATCC BAA-895 / CDC 4225-83 / SGSC4696)).